The following is a 183-amino-acid chain: Fetal and adult testis-expressed transcript protein (183 aa).

Residues 42–66 form a disordered region; that stretch reads SRSRGASQKKQKLEQKAAGSASAKR. The helical transmembrane segment at 163–181 threads the bilayer; sequence TLIIAVLVSASIANLWLWM.

Interacts with BIK and RNF183. Interacts with IMMT/MIC60and EMD. In terms of tissue distribution, testis-specific in fetus (aged from 6 to 11 weeks). In adult, expressed predominantly in testis, with some expression in lung, heart, kidney, adrenal gland and whole brain. Highly expressed in certain types of cancer tissues such as hepatocellular carcinoma, colon and gastric cancer. Weakly expressed in normal pancreas.

The protein localises to the mitochondrion. It is found in the mitochondrion outer membrane. Its subcellular location is the endoplasmic reticulum membrane. Functionally, involved in the regulation of endoplasmic reticulum (ER)-mitochondria coupling. Negatively regulates the ER-mitochondria distance and Ca(2+) transfer from ER to mitochondria possibly implicating it in the regulation of apoptosis. May collaborate with RNF183 to restrain BIK protein levels thus regulating apoptotic signaling. The polypeptide is Fetal and adult testis-expressed transcript protein (FATE1) (Homo sapiens (Human)).